The following is a 186-amino-acid chain: Large ribosomal subunit protein uL6 (186 aa).

The protein belongs to the universal ribosomal protein uL6 family. In terms of assembly, part of the 50S ribosomal subunit.

In terms of biological role, this protein binds to the 23S rRNA, and is important in its secondary structure. It is located near the subunit interface in the base of the L7/L12 stalk, and near the tRNA binding site of the peptidyltransferase center. This chain is Large ribosomal subunit protein uL6, found in Ignicoccus hospitalis (strain KIN4/I / DSM 18386 / JCM 14125).